Reading from the N-terminus, the 469-residue chain is Glutamate--tRNA ligase (469 aa).

The 'HIGH' region motif lies at 9 to 19; that stretch reads PSPTGFLHVGG. Positions 98, 100, 125, and 127 each coordinate Zn(2+). Residues 236–240 carry the 'KMSKS' region motif; it reads KLSKR. Residue Lys239 coordinates ATP.

The protein belongs to the class-I aminoacyl-tRNA synthetase family. Glutamate--tRNA ligase type 1 subfamily. In terms of assembly, monomer. It depends on Zn(2+) as a cofactor.

The protein resides in the cytoplasm. It carries out the reaction tRNA(Glu) + L-glutamate + ATP = L-glutamyl-tRNA(Glu) + AMP + diphosphate. Functionally, catalyzes the attachment of glutamate to tRNA(Glu) in a two-step reaction: glutamate is first activated by ATP to form Glu-AMP and then transferred to the acceptor end of tRNA(Glu). The protein is Glutamate--tRNA ligase of Shewanella halifaxensis (strain HAW-EB4).